We begin with the raw amino-acid sequence, 957 residues long: Protein CRT10 (957 aa).

The interval 695–719 (NSTEEDDVNSDPENEESGSSLTSFQ) is disordered. Residues 697-710 (TEEDDVNSDPENEE) are compositionally biased toward acidic residues. Residue Ser704 is modified to Phosphoserine.

Component of a cullin-RING ligase (CRL) composed of 4 subunits: the RING protein HRT1, the cullin RTT101, a linker protein MMS1, and the substrate receptor CRT10. Interacts with MMS1.

In terms of biological role, substrate targeting component of a cullin-RING-based E3 ubiquitin-protein ligase complex RTT101(MMS1-CRT10). RTT101(MMS1-CRT10) may regulate nucleotide synthesis through transcriptional regulation of RNR genes encoding ribonucleotide reductases. The protein is Protein CRT10 (CRT10) of Saccharomyces cerevisiae (strain ATCC 204508 / S288c) (Baker's yeast).